We begin with the raw amino-acid sequence, 393 residues long: Phosphopentomutase (393 aa).

Residues Asp-11, Asp-282, His-287, Asp-323, His-324, and His-335 each contribute to the Mn(2+) site.

The protein belongs to the phosphopentomutase family. The cofactor is Mn(2+).

The protein localises to the cytoplasm. It carries out the reaction 2-deoxy-alpha-D-ribose 1-phosphate = 2-deoxy-D-ribose 5-phosphate. It catalyses the reaction alpha-D-ribose 1-phosphate = D-ribose 5-phosphate. Its pathway is carbohydrate degradation; 2-deoxy-D-ribose 1-phosphate degradation; D-glyceraldehyde 3-phosphate and acetaldehyde from 2-deoxy-alpha-D-ribose 1-phosphate: step 1/2. Isomerase that catalyzes the conversion of deoxy-ribose 1-phosphate (dRib-1-P) and ribose 1-phosphate (Rib-1-P) to deoxy-ribose 5-phosphate (dRib-5-P) and ribose 5-phosphate (Rib-5-P), respectively. The polypeptide is Phosphopentomutase (Caldanaerobacter subterraneus subsp. tengcongensis (strain DSM 15242 / JCM 11007 / NBRC 100824 / MB4) (Thermoanaerobacter tengcongensis)).